Reading from the N-terminus, the 275-residue chain is Large ribosomal subunit protein uL2c (275 aa).

Positions 222–258 are disordered; it reads GSAMNPVDHPHGGGEGRAPIGRARPVSPWGRPALGAK.

It belongs to the universal ribosomal protein uL2 family. In terms of assembly, part of the 50S ribosomal subunit.

It is found in the plastid. It localises to the chloroplast. The sequence is that of Large ribosomal subunit protein uL2c (rpl2) from Chlorella vulgaris (Green alga).